Here is a 513-residue protein sequence, read N- to C-terminus: Sterol 14-alpha demethylase rstn2 (513 aa).

Residues 3–23 traverse the membrane as a helical segment; it reads WPLIGAYALLAFVAIIALNVT. Cys-453 lines the heme pocket.

Belongs to the cytochrome P450 family. Heme serves as cofactor.

It localises to the membrane. The catalysed reaction is a 14alpha-methyl steroid + 3 reduced [NADPH--hemoprotein reductase] + 3 O2 = a Delta(14) steroid + formate + 3 oxidized [NADPH--hemoprotein reductase] + 4 H2O + 4 H(+). The enzyme catalyses a 14alpha-methyl steroid + reduced [NADPH--hemoprotein reductase] + O2 = a 14alpha-hydroxymethyl steroid + oxidized [NADPH--hemoprotein reductase] + H2O + H(+). It catalyses the reaction a 14alpha-hydroxymethyl steroid + reduced [NADPH--hemoprotein reductase] + O2 = a 14alpha-formyl steroid + oxidized [NADPH--hemoprotein reductase] + 2 H2O + H(+). It carries out the reaction a 14alpha-formyl steroid + reduced [NADPH--hemoprotein reductase] + O2 = a Delta(14) steroid + formate + oxidized [NADPH--hemoprotein reductase] + H2O + 2 H(+). The catalysed reaction is lanosterol + 3 reduced [NADPH--hemoprotein reductase] + 3 O2 = 4,4-dimethyl-5alpha-cholesta-8,14,24-trien-3beta-ol + formate + 3 oxidized [NADPH--hemoprotein reductase] + 4 H2O + 4 H(+). The enzyme catalyses lanosterol + reduced [NADPH--hemoprotein reductase] + O2 = 32-hydroxylanosterol + oxidized [NADPH--hemoprotein reductase] + H2O + H(+). It catalyses the reaction 32-hydroxylanosterol + reduced [NADPH--hemoprotein reductase] + O2 = 32-oxolanosterol + oxidized [NADPH--hemoprotein reductase] + 2 H2O + H(+). It carries out the reaction 32-oxolanosterol + reduced [NADPH--hemoprotein reductase] + O2 = 4,4-dimethyl-5alpha-cholesta-8,14,24-trien-3beta-ol + formate + oxidized [NADPH--hemoprotein reductase] + H2O + 2 H(+). The catalysed reaction is eburicol + 3 reduced [NADPH--hemoprotein reductase] + 3 O2 = 14-demethyleburicol + formate + 3 oxidized [NADPH--hemoprotein reductase] + 4 H2O + 4 H(+). The enzyme catalyses eburicol + reduced [NADPH--hemoprotein reductase] + O2 = 32-hydroxyeburicol + oxidized [NADPH--hemoprotein reductase] + H2O + H(+). It catalyses the reaction 32-hydroxyeburicol + reduced [NADPH--hemoprotein reductase] + O2 = 32-oxoeburicol + oxidized [NADPH--hemoprotein reductase] + 2 H2O + H(+). It carries out the reaction 32-oxoeburicol + reduced [NADPH--hemoprotein reductase] + O2 = 14-demethyleburicol + formate + oxidized [NADPH--hemoprotein reductase] + H2O + 2 H(+). The protein operates within steroid biosynthesis; sterol biosynthesis. Its function is as follows. Sterol 14-alpha demethylase; part of the gene cluster that mediates the biosynthesis of the tetrahydropyranyl antifungal agent restricticin that acts as an inhibitor of CYP51 and blocks the ergosterol biosynthesis. Sterol 14-alpha-demethylase plays a critical role in the biosynthesis of ergosterol, the major sterol component in fungal membranes that participates in a variety of functions. Rtsn2 acts as a self-resistant CYP51 that contains mutations found in CYP51s isolated from azole resistance strains and that is not inhibited by the final product of the cluster, restricticin. This chain is Sterol 14-alpha demethylase rstn2, found in Aspergillus nomiae NRRL (strain ATCC 15546 / NRRL 13137 / CBS 260.88 / M93).